The chain runs to 367 residues: tRNA/tmRNA (uracil-C(5))-methyltransferase (367 aa).

The S-adenosyl-L-methionine site is built by Gln-190, Tyr-218, Asn-223, Glu-239, and Asp-299. Residue Cys-324 is the Nucleophile of the active site. Catalysis depends on Glu-358, which acts as the Proton acceptor.

The protein belongs to the class I-like SAM-binding methyltransferase superfamily. RNA M5U methyltransferase family. TrmA subfamily.

The enzyme catalyses uridine(54) in tRNA + S-adenosyl-L-methionine = 5-methyluridine(54) in tRNA + S-adenosyl-L-homocysteine + H(+). It carries out the reaction uridine(341) in tmRNA + S-adenosyl-L-methionine = 5-methyluridine(341) in tmRNA + S-adenosyl-L-homocysteine + H(+). Functionally, dual-specificity methyltransferase that catalyzes the formation of 5-methyluridine at position 54 (m5U54) in all tRNAs, and that of position 341 (m5U341) in tmRNA (transfer-mRNA). This Musicola paradisiaca (strain Ech703) (Dickeya paradisiaca) protein is tRNA/tmRNA (uracil-C(5))-methyltransferase.